We begin with the raw amino-acid sequence, 188 residues long: Crossover junction endodeoxyribonuclease RuvC (188 aa).

Catalysis depends on residues aspartate 7, glutamate 68, and aspartate 141. Residues aspartate 7, glutamate 68, and aspartate 141 each contribute to the Mg(2+) site.

The protein belongs to the RuvC family. In terms of assembly, homodimer which binds Holliday junction (HJ) DNA. The HJ becomes 2-fold symmetrical on binding to RuvC with unstacked arms; it has a different conformation from HJ DNA in complex with RuvA. In the full resolvosome a probable DNA-RuvA(4)-RuvB(12)-RuvC(2) complex forms which resolves the HJ. Requires Mg(2+) as cofactor.

The protein localises to the cytoplasm. It catalyses the reaction Endonucleolytic cleavage at a junction such as a reciprocal single-stranded crossover between two homologous DNA duplexes (Holliday junction).. The RuvA-RuvB-RuvC complex processes Holliday junction (HJ) DNA during genetic recombination and DNA repair. Endonuclease that resolves HJ intermediates. Cleaves cruciform DNA by making single-stranded nicks across the HJ at symmetrical positions within the homologous arms, yielding a 5'-phosphate and a 3'-hydroxyl group; requires a central core of homology in the junction. The consensus cleavage sequence is 5'-(A/T)TT(C/G)-3'. Cleavage occurs on the 3'-side of the TT dinucleotide at the point of strand exchange. HJ branch migration catalyzed by RuvA-RuvB allows RuvC to scan DNA until it finds its consensus sequence, where it cleaves and resolves the cruciform DNA. The sequence is that of Crossover junction endodeoxyribonuclease RuvC from Streptomyces coelicolor (strain ATCC BAA-471 / A3(2) / M145).